Consider the following 722-residue polypeptide: Cellulose synthase-like protein G2 (722 aa).

The next 2 helical transmembrane spans lie at 25-45 (IYAV…VHSI) and 51-71 (TLIT…WATT). Active-site residues include Asp-139 and Asp-437. The next 6 helical transmembrane spans lie at 514-534 (FWPF…VALI), 548-568 (FWLY…DFLL), 583-605 (WMVR…TLNL), 635-655 (PSSS…LAFM), 660-680 (GIFT…FAVV), and 702-722 (ICFL…FFLK).

Belongs to the glycosyltransferase 2 family. Plant cellulose synthase-like G subfamily. As to expression, expressed in young seedlings, primarily in the vascular tissue.

Its subcellular location is the golgi apparatus membrane. Functionally, thought to be a Golgi-localized beta-glycan synthase that polymerize the backbones of noncellulosic polysaccharides (hemicelluloses) of plant cell wall. The polypeptide is Cellulose synthase-like protein G2 (CSLG2) (Arabidopsis thaliana (Mouse-ear cress)).